Here is a 65-residue protein sequence, read N- to C-terminus: Large ribosomal subunit protein uL29 (65 aa).

Positions 30–49 (ERSSVAMGGAPSSPGKMRSI) are disordered.

This sequence belongs to the universal ribosomal protein uL29 family.

This Picrophilus torridus (strain ATCC 700027 / DSM 9790 / JCM 10055 / NBRC 100828 / KAW 2/3) protein is Large ribosomal subunit protein uL29.